The chain runs to 730 residues: 1,4-alpha-glucan branching enzyme GlgB (730 aa).

Asp405 serves as the catalytic Nucleophile. Glu458 serves as the catalytic Proton donor.

This sequence belongs to the glycosyl hydrolase 13 family. GlgB subfamily. As to quaternary structure, monomer.

It catalyses the reaction Transfers a segment of a (1-&gt;4)-alpha-D-glucan chain to a primary hydroxy group in a similar glucan chain.. Its pathway is glycan biosynthesis; glycogen biosynthesis. Catalyzes the formation of the alpha-1,6-glucosidic linkages in glycogen by scission of a 1,4-alpha-linked oligosaccharide from growing alpha-1,4-glucan chains and the subsequent attachment of the oligosaccharide to the alpha-1,6 position. The sequence is that of 1,4-alpha-glucan branching enzyme GlgB from Haemophilus influenzae (strain PittGG).